The chain runs to 248 residues: Probable transcriptional regulatory protein BRADO1143 (248 aa).

It belongs to the TACO1 family.

Its subcellular location is the cytoplasm. This Bradyrhizobium sp. (strain ORS 278) protein is Probable transcriptional regulatory protein BRADO1143.